Reading from the N-terminus, the 384-residue chain is Probable peptidoglycan glycosyltransferase FtsW (384 aa).

At 1-19 (MAAVWRWFVPERPSFYDRG) the chain is on the cytoplasmic side. A helical membrane pass occupies residues 20–40 (LLALTFSLMGIGLMMVASASI). The Periplasmic segment spans residues 41–54 (KEGPGGDMFYFTKR). A helical transmembrane segment spans residues 55–75 (HLIFLFVCLGIGVGTLYLPLE). Over 76-83 (RWREWSGR) the chain is Cytoplasmic. A helical membrane pass occupies residues 84-104 (LLVGALGLLFAVLAVGRTVNG). Topologically, residues 105–110 (AKRWIG) are periplasmic. Residues 111-131 (FGFFNIQPAELAKLALIVFIA) form a helical membrane-spanning segment. Over 132 to 143 (SYLVRRSDEVRG) the chain is Cytoplasmic. Residues 144–164 (NIAGFVKPLAVVFLLAIMLLA) form a helical membrane-spanning segment. The Periplasmic segment spans residues 165–166 (QP). Residues 167-187 (DLGSVVVLFVCTFGLLFIGGA) form a helical membrane-spanning segment. K188 is a topological domain (cytoplasmic). A helical transmembrane segment spans residues 189 to 209 (LVQFIAIIVAGLSALAGLIIY). Topologically, residues 210–267 (EPYRLRRVTSFLDPWADPFGSGYQLTQSLMAFGRGGFFGQGLGNSVQKLSYLPEAHTD) are periplasmic. A helical transmembrane segment spans residues 268–288 (FVFAILGEELGYFGVLVVLFL). At 289–316 (QLLLAMKALQIGRTALLRSKFFEGYMAC) the chain is on the cytoplasmic side. Residues 317-337 (GIGIWFSFQTVVNVGAAAGML) traverse the membrane as a helical segment. Residues 338–343 (PTKGLT) are Periplasmic-facing. The helical transmembrane segment at 344-364 (LPLVSYGGSSLIAITMAVAIL) threads the bilayer. The Cytoplasmic segment spans residues 365-384 (LRIDFERRLDTSHVIQREAA).

It belongs to the SEDS family. FtsW subfamily.

It is found in the cell inner membrane. The catalysed reaction is [GlcNAc-(1-&gt;4)-Mur2Ac(oyl-L-Ala-gamma-D-Glu-L-Lys-D-Ala-D-Ala)](n)-di-trans,octa-cis-undecaprenyl diphosphate + beta-D-GlcNAc-(1-&gt;4)-Mur2Ac(oyl-L-Ala-gamma-D-Glu-L-Lys-D-Ala-D-Ala)-di-trans,octa-cis-undecaprenyl diphosphate = [GlcNAc-(1-&gt;4)-Mur2Ac(oyl-L-Ala-gamma-D-Glu-L-Lys-D-Ala-D-Ala)](n+1)-di-trans,octa-cis-undecaprenyl diphosphate + di-trans,octa-cis-undecaprenyl diphosphate + H(+). It functions in the pathway cell wall biogenesis; peptidoglycan biosynthesis. Its function is as follows. Peptidoglycan polymerase that is essential for cell division. The chain is Probable peptidoglycan glycosyltransferase FtsW from Tolumonas auensis (strain DSM 9187 / NBRC 110442 / TA 4).